The sequence spans 1458 residues: Phospholipase B1, membrane-associated (1458 aa).

The first 21 residues, methionine 1–proline 21, serve as a signal peptide directing secretion. Residues glutamine 22–tyrosine 1417 lie on the Extracellular side of the membrane. Tandem repeats lie at residues glutamate 39–serine 347, valine 362–serine 707, and methionine 708–serine 1054. Residues glutamate 39–serine 1402 are 4 X 308-326 AA approximate repeats. Residues asparagine 173 and asparagine 240 are each glycosylated (N-linked (GlcNAc...) asparagine). Serine 400 is an active-site residue. An N-linked (GlcNAc...) asparagine glycan is attached at asparagine 493. Aspartate 514 is a catalytic residue. Asparagine 529 and asparagine 590 each carry an N-linked (GlcNAc...) asparagine glycan. Histidine 655 is an active-site residue. 8 N-linked (GlcNAc...) asparagine glycosylation sites follow: asparagine 690, asparagine 783, asparagine 797, asparagine 809, asparagine 1055, asparagine 1113, asparagine 1275, and asparagine 1378. Repeat 4 spans residues isoleucine 1064 to serine 1402. A necessary for membrane localization region spans residues arginine 1403 to arginine 1445. Residues tryptophan 1418–tryptophan 1438 traverse the membrane as a helical segment. Topologically, residues arginine 1439–leucine 1458 are cytoplasmic.

Belongs to the 'GDSL' lipolytic enzyme family. Phospholipase B1 subfamily. In terms of processing, undergoes proteolytic cleavage in the ileum. As to expression, expressed in the epidermis (at protein level).

Its subcellular location is the apical cell membrane. It carries out the reaction a 1,2-diacyl-sn-glycero-3-phosphocholine + H2O = a 1-acyl-sn-glycero-3-phosphocholine + a fatty acid + H(+). The catalysed reaction is a 1-O-alkyl-2-acyl-sn-glycero-3-phosphocholine + H2O = a 1-O-alkyl-sn-glycero-3-phosphocholine + a fatty acid + H(+). It catalyses the reaction a 1-acyl-sn-glycero-3-phosphocholine + H2O = sn-glycerol 3-phosphocholine + a fatty acid + H(+). The enzyme catalyses a triacylglycerol + H2O = a diacylglycerol + a fatty acid + H(+). It carries out the reaction 1,2-dihexadecanoyl-sn-glycero-3-phosphocholine + H2O = 1-hexadecanoyl-sn-glycero-3-phosphocholine + hexadecanoate + H(+). The catalysed reaction is 1-hexadecanoyl-2-(9Z-octadecenoyl)-sn-glycero-3-phosphocholine + H2O = 1-hexadecanoyl-sn-glycero-3-phosphocholine + (9Z)-octadecenoate + H(+). It catalyses the reaction 1,2-di-(9Z-octadecenoyl)-sn-glycero-3-phosphocholine + H2O = 1-(9Z-octadecenoyl)-sn-glycero-3-phosphocholine + (9Z)-octadecenoate + H(+). The enzyme catalyses 1-hexadecanoyl-2-(9Z,12Z-octadecadienoyl)-sn-glycero-3-phosphocholine + H2O = (9Z,12Z)-octadecadienoate + 1-hexadecanoyl-sn-glycero-3-phosphocholine + H(+). It carries out the reaction 1-hexadecanoyl-2-(9Z,12Z-octadecadienoyl)-sn-glycero-3-phosphocholine + H2O = 2-(9Z,12Z-octadecadienoyl)-sn-glycero-3-phosphocholine + hexadecanoate + H(+). The catalysed reaction is 1-hexadecanoyl-2-(9Z-octadecenoyl)-sn-glycero-3-phosphoethanolamine + H2O = 1-hexadecanoyl-sn-glycero-3-phosphoethanolamine + (9Z)-octadecenoate + H(+). It catalyses the reaction 1-hexadecanoyl-2-(9Z-octadecenoyl)-sn-glycero-3-phospho-(1'-sn-glycerol) + H2O = 1-hexadecanoyl-sn-glycero-3-phospho-(1'-sn-glycerol) + (9Z)-octadecenoate + H(+). The enzyme catalyses 1,2-dihexadecanoyl-sn-glycero-3-phosphocholine + 2 H2O = sn-glycerol 3-phosphocholine + 2 hexadecanoate + 2 H(+). It carries out the reaction 1-O-hexadecyl-2-(9Z)-octadecenoyl-sn-glycero-3-phosphocholine + H2O = 1-O-hexadecyl-sn-glycero-3-phosphocholine + (9Z)-octadecenoate + H(+). The catalysed reaction is 1-hexadecanoyl-sn-glycero-3-phosphocholine + H2O = sn-glycerol 3-phosphocholine + hexadecanoate + H(+). It catalyses the reaction 1,2,3-tri-(9Z-octadecenoyl)-glycerol + H2O = di-(9Z)-octadecenoylglycerol + (9Z)-octadecenoate + H(+). The enzyme catalyses 1-hexadecanoyl-2-(9Z)-octadecenoyl-3-octadecanoyl-sn-glycerol + H2O = 1-hexadecanoyl-2-(9Z-octadecenoyl)-sn-glycerol + octadecanoate + H(+). It carries out the reaction 1,3-dihexadecanoyl-2-(9Z-octadecenoyl)glycerol + H2O = 1,3-dihexadecanoylglycerol + (9Z)-octadecenoate + H(+). The catalysed reaction is 1,3-dihexadecanoyl-2-(9Z-octadecenoyl)glycerol + H2O = 1-hexadecanoyl-2-(9Z-octadecenoyl)-glycerol + hexadecanoate + H(+). It catalyses the reaction 1-hexadecanoyl-2-(9Z)-octadecenoyl-3-octadecanoyl-sn-glycerol + H2O = 1-hexadecanoyl-3-octadecanoyl-sn-glycerol + (9Z)-octadecenoate + H(+). The enzyme catalyses 1-hexadecanoyl-2-(9Z)-octadecenoyl-3-octadecanoyl-sn-glycerol + H2O = 2-(9Z-octadecenoyl)-3-octadecanoyl-sn-glycerol + hexadecanoate + H(+). It carries out the reaction 1-octadecanoyl-2-(9Z,12Z)-octadecadienoyl-sn-glycerol + H2O = 1-octadecanoyl-sn-glycerol + (9Z,12Z)-octadecadienoate + H(+). The catalysed reaction is 1,2-di-(9Z-octadecenoyl)-sn-glycerol + H2O = 1-(9Z-octadecenoyl)-sn-glycerol + (9Z)-octadecenoate + H(+). It catalyses the reaction 2,3-di-(9Z)-octadecenoyl-sn-glycerol + H2O = 3-(9Z-octadecenoyl)-sn-glycerol + (9Z)-octadecenoate + H(+). The enzyme catalyses 1,3-di-(9Z-octadecenoyl)-glycerol + H2O = 1-(9Z-octadecenoyl)-glycerol + (9Z)-octadecenoate + H(+). It carries out the reaction 1-(9Z-octadecenoyl)-glycerol + H2O = glycerol + (9Z)-octadecenoate + H(+). The catalysed reaction is 2-(9Z-octadecenoyl)-glycerol + H2O = glycerol + (9Z)-octadecenoate + H(+). In terms of biological role, calcium-independent membrane-associated phospholipase that catalyzes complete diacylation of phospholipids by hydrolyzing both sn-1 and sn-2 fatty acyl chains attached to the glycerol backbone (phospholipase B activity). Has dual phospholipase and lysophospholipase activities toward diacylphospholipids. Preferentially cleaves sn-2 ester bonds over sn-1 bonds. Acts as a lipase toward glycerolipid substrates. Hydrolyzes fatty acyl chains of diacylglycerols with preference for the sn-2 position and of triacylglycerols with not positional selectivity. May also hydrolyze long chain retinyl esters such as retinyl palmitate. May contribute to digestion of dietary phospholipids, glycerolipids and retinoids, facilitating lipid absorption at the brush border. This is Phospholipase B1, membrane-associated (PLB1) from Homo sapiens (Human).